We begin with the raw amino-acid sequence, 33 residues long: Cysteine-rich venom protein tripurin (33 aa).

The protein belongs to the CRISP family. In terms of processing, contains 8 disulfide bonds. Expressed by the venom gland.

Its subcellular location is the secreted. In terms of biological role, blocks contraction of smooth muscle elicited by high potassium-induced depolarization, but does not block caffeine-stimulated contraction. May target voltage-gated calcium channels on smooth muscle. This Trimeresurus purpureomaculatus (Mangrove pit viper) protein is Cysteine-rich venom protein tripurin.